Here is a 104-residue protein sequence, read N- to C-terminus: Protein U9 (104 aa).

The helical transmembrane segment at 37 to 54 (GVQGLNADCSYVKSQCIK) threads the bilayer.

Its subcellular location is the host membrane. This chain is Protein U9 (U9), found in Human herpesvirus 6B (HHV-6 variant B).